The sequence spans 82 residues: RNA-binding protein GWCH70_0105 (82 aa).

The protein belongs to the eukaryotic ribosomal protein eL8 family.

The chain is RNA-binding protein GWCH70_0105 from Geobacillus sp. (strain WCH70).